The chain runs to 135 residues: Lymphocyte antigen 6B (135 aa).

An N-terminal signal peptide occupies residues 1-26 (MNRSCAMKSCVLILLLALLCAERAQG). The 93-residue stretch at 27 to 119 (LNCYNCTMIP…PTGGSTWTMA (93 aa)) folds into the UPAR/Ly6 domain. Disulfide bonds link Cys29–Cys54, Cys32–Cys41, Cys47–Cys75, Cys79–Cys99, and Cys100–Cys105. Residue Gly113 is the site of GPI-anchor amidated glycine attachment. Residues 114 to 135 (STWTMAGVLLFILGSVLLQTLL) constitute a propeptide, removed in mature form.

The protein localises to the cell membrane. The polypeptide is Lymphocyte antigen 6B (Ly6b) (Rattus norvegicus (Rat)).